A 325-amino-acid polypeptide reads, in one-letter code: Phospholipid phosphatase-related protein type 1 (325 aa).

A glycan (N-linked (GlcNAc...) asparagine) is linked at asparagine 5. A run of 3 helical transmembrane segments spans residues 13–33 (IIPC…LLAY), 67–87 (FISP…IIFI), and 127–147 (FIGV…AGQV). N-linked (GlcNAc...) asparagine glycosylation is present at asparagine 163. 3 helical membrane-spanning segments follow: residues 201–219 (AALS…TSTI), 226–244 (LAKP…LTGL), and 257–277 (VIAG…CVVH). Serine 307 is subject to Phosphoserine. Asparagine 316 carries an N-linked (GlcNAc...) asparagine glycan.

It belongs to the PA-phosphatase related phosphoesterase family. In terms of tissue distribution, highly expressed in the brain. Also found in the liver, kidney and testis. In the brain shows a strongest expression in the hippocampus and cerebellum.

It localises to the cell membrane. It is found in the cell projection. The protein resides in the neuron projection. May play a role in neurite outgrowth and neurogenesis. The polypeptide is Phospholipid phosphatase-related protein type 1 (Rattus norvegicus (Rat)).